Here is a 105-residue protein sequence, read N- to C-terminus: Large ribosomal subunit protein bL21 (105 aa).

This sequence belongs to the bacterial ribosomal protein bL21 family. As to quaternary structure, part of the 50S ribosomal subunit. Contacts protein L20.

Its function is as follows. This protein binds to 23S rRNA in the presence of protein L20. This is Large ribosomal subunit protein bL21 from Thermotoga maritima (strain ATCC 43589 / DSM 3109 / JCM 10099 / NBRC 100826 / MSB8).